The sequence spans 429 residues: Glutamate-1-semialdehyde 2,1-aminomutase 2 (429 aa).

Position 268 is an N6-(pyridoxal phosphate)lysine (Lys268).

It belongs to the class-III pyridoxal-phosphate-dependent aminotransferase family. HemL subfamily. Homodimer. Requires pyridoxal 5'-phosphate as cofactor.

Its subcellular location is the cytoplasm. The enzyme catalyses (S)-4-amino-5-oxopentanoate = 5-aminolevulinate. The protein operates within porphyrin-containing compound metabolism; protoporphyrin-IX biosynthesis; 5-aminolevulinate from L-glutamyl-tRNA(Glu): step 2/2. In Halalkalibacterium halodurans (strain ATCC BAA-125 / DSM 18197 / FERM 7344 / JCM 9153 / C-125) (Bacillus halodurans), this protein is Glutamate-1-semialdehyde 2,1-aminomutase 2.